A 288-amino-acid chain; its full sequence is Aquaporin PIP1-5 (288 aa).

A disordered region spans residues 1 to 36; the sequence is MEGKEEDVRLGANRYSERQPIGTAAQGTEEKDYKEP. 2 helical membrane-spanning segments follow: residues 57 to 77 and 92 to 114; these read IAEF…VMGV and IAWS…SGGH. The short motif at 116–118 is the NPA 1 element; that stretch reads NPA. The next 3 helical transmembrane spans lie at 135 to 155, 177 to 197, and 211 to 231; these read LFYM…VKGF, GDGL…VFSA, and ILAP…TIPI. The short motif at 237 to 239 is the NPA 2 element; it reads NPA. The chain crosses the membrane as a helical span at residues 259–279; it reads IFWVGPFIGAALAAIYHVVII.

It belongs to the MIP/aquaporin (TC 1.A.8) family. PIP (TC 1.A.8.11) subfamily. Highly expressed in roots and at lower levels in anthers and silks.

The protein resides in the cell membrane. Its function is as follows. Water channel required to facilitate the transport of water across cell membrane. This is Aquaporin PIP1-5 (PIP1-5) from Zea mays (Maize).